A 183-amino-acid chain; its full sequence is Pyruvoyl-dependent arginine decarboxylase (183 aa).

A Pyruvic acid (Ser) modification is found at Ser44.

This sequence belongs to the PdaD family. Requires pyruvate as cofactor.

The catalysed reaction is L-arginine + H(+) = agmatine + CO2. The chain is Pyruvoyl-dependent arginine decarboxylase from Nitrosopumilus maritimus (strain SCM1).